We begin with the raw amino-acid sequence, 475 residues long: Ataxin-10 (475 aa).

Omega-N-methylarginine is present on arginine 10. A phosphoserine mark is found at serine 12 and serine 77. A Phosphothreonine modification is found at threonine 82. Serine 430 bears the Phosphoserine mark.

Belongs to the ataxin-10 family. As to quaternary structure, homooligomer. Interacts with GNB2. Interacts with IQCB1. Interacts with OGT. Post-translationally, polyubiquitinated. In terms of processing, phosphorylation at Ser-12 by AURKB promotes the association of ATXN10 with PLK1. Phosphorylation at Ser-77 and Thr-82 by PLK1 may play a role in the regulation of cytokinesis and may stimulate the proteasome-mediated degradation of ATXN10. In terms of tissue distribution, ubiquitous distribution. Markedly increased expression in testis, adrenals, and brain.

Its subcellular location is the cytoplasm. It localises to the perinuclear region. The protein resides in the midbody. It is found in the cytoskeleton. The protein localises to the cilium basal body. Its subcellular location is the microtubule organizing center. It localises to the centrosome. The protein resides in the centriole. Functionally, may play a role in the regulation of cytokinesis. May play a role in signaling by stimulating protein glycosylation. Induces neuritogenesis by activating the Ras-MAP kinase pathway and is necessary for the survival of cerebellar neurons. Does not appear to play a major role in ciliogenesis. This Rattus norvegicus (Rat) protein is Ataxin-10 (Atxn10).